A 595-amino-acid polypeptide reads, in one-letter code: Chaperone protein HscA homolog (595 aa).

It belongs to the heat shock protein 70 family.

Chaperone involved in the maturation of iron-sulfur cluster-containing proteins. Has a low intrinsic ATPase activity which is markedly stimulated by HscB. In Rickettsia conorii (strain ATCC VR-613 / Malish 7), this protein is Chaperone protein HscA homolog.